The chain runs to 244 residues: 1-(5-phosphoribosyl)-5-[(5-phosphoribosylamino)methylideneamino] imidazole-4-carboxamide isomerase (244 aa).

Aspartate 8 functions as the Proton acceptor in the catalytic mechanism. The active-site Proton donor is the aspartate 129.

Belongs to the HisA/HisF family.

The protein localises to the cytoplasm. It catalyses the reaction 1-(5-phospho-beta-D-ribosyl)-5-[(5-phospho-beta-D-ribosylamino)methylideneamino]imidazole-4-carboxamide = 5-[(5-phospho-1-deoxy-D-ribulos-1-ylimino)methylamino]-1-(5-phospho-beta-D-ribosyl)imidazole-4-carboxamide. The protein operates within amino-acid biosynthesis; L-histidine biosynthesis; L-histidine from 5-phospho-alpha-D-ribose 1-diphosphate: step 4/9. This is 1-(5-phosphoribosyl)-5-[(5-phosphoribosylamino)methylideneamino] imidazole-4-carboxamide isomerase from Bradyrhizobium sp. (strain ORS 278).